We begin with the raw amino-acid sequence, 440 residues long: Endoplasmic reticulum junction formation protein lunapark (440 aa).

The Cytoplasmic portion of the chain corresponds to methionine 1 to arginine 45. Positions glutamate 16–lysine 40 form a coiled coil. A helical transmembrane segment spans residues leucine 46–leucine 66. Residues proline 67 to threonine 77 are Lumenal-facing. A helical transmembrane segment spans residues leucine 78–phenylalanine 98. The Cytoplasmic segment spans residues serine 99–glutamate 440. Positions arginine 100 to threonine 128 form a coiled coil. A disordered region spans residues leucine 149–arginine 169. Threonine 159 is modified (phosphothreonine). Phosphoserine occurs at positions 177, 179, 188, and 192. Threonine 198 is subject to Phosphothreonine. The disordered stretch occupies residues glutamine 202–proline 247. 2 positions are modified to phosphoserine: serine 206 and serine 215. Residues valine 216–leucine 225 are compositionally biased toward polar residues. Residue threonine 219 is modified to Phosphothreonine. A phosphoserine mark is found at serine 222 and serine 231. The C4-type; plays a role in ER morphology zinc-finger motif lies at cysteine 280–cysteine 305. The disordered stretch occupies residues proline 316–glutamate 440. Position 325 is a phosphoserine (serine 325). The span at aspartate 334–glutamine 343 shows a compositional bias: polar residues. Composition is skewed to acidic residues over residues glutamine 370–glutamate 411 and glutamate 431–glutamate 440.

It belongs to the lunapark family. As to quaternary structure, homodimer; homodimerization requires the C4-type zinc finger motif and decreases during mitosis in a phosphorylation-dependent manner. Post-translationally, phosphorylated. Phosphorylation at Thr-159 and Ser-325 occurs during interphase. Phosphorylation at Ser-177, Ser-179, Ser-188, Ser-192, Thr-198, Ser-206, Ser-215, Thr-219, Ser-222 and Ser-231 occurs during mitosis; these phosphorylations reduce both its homodimerization and the ER three-way tubular junction formation.

The protein resides in the endoplasmic reticulum membrane. Endoplasmic reticulum (ER)-shaping membrane protein that plays a role in determining ER morphology. Involved in the stabilization of nascent three-way ER tubular junctions within the ER network. May also play a role as a curvature-stabilizing protein within three-way ER tubular junction network. The chain is Endoplasmic reticulum junction formation protein lunapark (lnpk) from Xenopus laevis (African clawed frog).